Consider the following 211-residue polypeptide: Interleukin-6 (211 aa).

The N-terminal stretch at 1-24 (MKFLSARDFHPVAFLGLMLVTTTA) is a signal peptide. Cystine bridges form between C70–C76 and C99–C109.

It belongs to the IL-6 superfamily. Component of a hexamer of two molecules each of IL6, IL6R and IL6ST; first binds to IL6R to associate with the signaling subunit IL6ST. Interacts with IL6R (via the N-terminal ectodomain); this interaction may be affected by IL6R-binding with SORL1, hence decreasing IL6 cis signaling. Interacts with SORL1 (via the N-terminal ectodomain); this interaction leads to IL6 internalization and lysosomal degradation. May form a trimeric complex with the soluble SORL1 ectodomain and soluble IL6R receptor; this interaction might stabilize circulating IL6, hence promoting IL6 trans signaling. N- and O-glycosylated. As to expression, expressed by dendritic cells and macrophages. Expressed by activated follicular B cells. Abundantly expressed in the central nervous system (CNS), particularly the hypothalamic region.

It is found in the secreted. Its function is as follows. Cytokine with a wide variety of biological functions in immunity, tissue regeneration, and metabolism. Binds to IL6R, then the complex associates to the signaling subunit IL6ST/gp130 to trigger the intracellular IL6-signaling pathway. The interaction with the membrane-bound IL6R and IL6ST stimulates 'classic signaling', whereas the binding of IL6 and soluble IL6R to IL6ST stimulates 'trans-signaling'. Alternatively, 'cluster signaling' occurs when membrane-bound IL6:IL6R complexes on transmitter cells activate IL6ST receptors on neighboring receiver cells. In terms of biological role, IL6 is a potent inducer of the acute phase response. Rapid production of IL6 contributes to host defense during infection and tissue injury, but excessive IL6 synthesis is involved in disease pathology. In the innate immune response, is synthesized by myeloid cells, such as macrophages and dendritic cells, upon recognition of pathogens through toll-like receptors (TLRs) at the site of infection or tissue injury. In the adaptive immune response, is required for the differentiation of B-cells into immunoglolin-secreting cells. Plays a major role in the differentiation of CD4(+) T cell subsets. Essential factor for the development of T follicular helper (Tfh) cells that are required for the induction of germinal-center formation. Together with IL21, controls the early generation of Tfh cells and are critical for an effective antibody response to acute viral infection. Required to drive naive CD4(+) T cells to the Th17 lineage, through 'cluster signaling' by dendritic cells. Also required for proliferation of myeloma cells and the survival of plasmablast cells. Functionally, acts as an essential factor in bone homeostasis and on vessels directly or indirectly by induction of VEGF, resulting in increased angiogenesis activity and vascular permeability. Induces, through 'trans-signaling' and synergistically with IL1B and TNF, the production of VEGF. Involved in metabolic controls, is discharged into the bloodstream after muscle contraction increasing lipolysis and improving insulin resistance. 'Trans-signaling' in central nervous system regulates energy and glucose homeostasis. Mediates, through GLP-1, crosstalk between insulin-sensitive tissues, intestinal L cells and pancreatic islets to adapt to changes in insulin demand. Also acts as a myokine. Plays a protective role during liver injury, being required for maintenance of tissue regeneration. Also has a pivotal role in iron metabolism by regulating HAMP/hepcidin expression upon inflammation or bacterial infection. Through activation of IL6ST-YAP-NOTCH pathway, induces inflammation-induced epithelial regeneration. The protein is Interleukin-6 of Mus musculus (Mouse).